Reading from the N-terminus, the 439-residue chain is MVLKVVYYKKREKNQTLDDITNNESINNTNEYDLSDDSDLSYIIESYDDQNEEETEETNDDAVKLLKDIRKSFTNTEELKEDEFKDNNIVFSFQNYLFGVNKEHNIFNLQNRITLDDKILDYPTEPYSNTNSNFFNTRSINNNSSTFNNDDSNNSIIRESRNFSNQMNISEISSDKQIDSNINTLIEMQRDSTKFSAEITKTISKLNNTLNTINQNQVVLHKTIESHFIKITESLNYLIQPQQQQQQQQQQQQQQQQQQQQQQQQQQQQQQQQQPQHNNNNTQVQPPPPSQQLPPPPKPQPQLPKPQPQKPQPQLPKPPQQPKPPQEPQPDLTSLLKPKIKKQPPKEQQQEQQQQPPQEQQQQQPQEQQQQQQQQQQQQQQQQQQQQQQQQQPQEQQQQQQEPQHKTTTTTTQNNYHNNNNNNTTTPTTRTRFTTTNLH.

A compositionally biased stretch (low complexity) spans 268 to 284 (QQQQQQQPQHNNNNTQV). The tract at residues 268–439 (QQQQQQQPQH…RTRFTTTNLH (172 aa)) is disordered. Over residues 285–328 (QPPPPSQQLPPPPKPQPQLPKPQPQKPQPQLPKPPQQPKPPQEP) the composition is skewed to pro residues. The span at 350-439 (QEQQQQPPQE…RTRFTTTNLH (90 aa)) shows a compositional bias: low complexity.

This is an uncharacterized protein from Dictyostelium discoideum (Social amoeba).